The chain runs to 741 residues: 1,4-alpha-glucan branching enzyme GlgB 2 (741 aa).

Residues 1-38 (MALRDTSIPEPSGPVPPAPGACATAPPLDPTDRGRLLA) are disordered. Aspartate 421 acts as the Nucleophile in catalysis. Glutamate 474 acts as the Proton donor in catalysis.

Belongs to the glycosyl hydrolase 13 family. GlgB subfamily. As to quaternary structure, monomer.

The catalysed reaction is Transfers a segment of a (1-&gt;4)-alpha-D-glucan chain to a primary hydroxy group in a similar glucan chain.. It functions in the pathway glycan biosynthesis; glycogen biosynthesis. In terms of biological role, catalyzes the formation of the alpha-1,6-glucosidic linkages in glycogen by scission of a 1,4-alpha-linked oligosaccharide from growing alpha-1,4-glucan chains and the subsequent attachment of the oligosaccharide to the alpha-1,6 position. This chain is 1,4-alpha-glucan branching enzyme GlgB 2 (glgB2), found in Streptomyces coelicolor (strain ATCC BAA-471 / A3(2) / M145).